Consider the following 168-residue polypeptide: MRRYETIFIADPDLSPENQAQLFEKATTLIDANSGVLVEFDEWGTRRLAYEIRKKPRGHYVRLDFCGDGATVQGLENAFRIDERVLKFMTVFLSENADPEALRQAIAEEKEKKAEGQAAADAAPADGDDEAPKQPAPASDDDAPKQPETEAGSDETEAAAADKSDDNA.

The segment at 103 to 168 (RQAIAEEKEK…AAADKSDDNA (66 aa)) is disordered. The span at 106-115 (IAEEKEKKAE) shows a compositional bias: basic and acidic residues. A compositionally biased stretch (low complexity) spans 116–125 (GQAAADAAPA).

It belongs to the bacterial ribosomal protein bS6 family.

Functionally, binds together with bS18 to 16S ribosomal RNA. The sequence is that of Small ribosomal subunit protein bS6 from Desulfosudis oleivorans (strain DSM 6200 / JCM 39069 / Hxd3) (Desulfococcus oleovorans).